Here is a 181-residue protein sequence, read N- to C-terminus: Oligoribonuclease (181 aa).

The Exonuclease domain maps to 8–171 (LIWIDLEMTG…DDIRESVAEL (164 aa)). Tyrosine 129 is a catalytic residue.

This sequence belongs to the oligoribonuclease family. Homodimer.

Its subcellular location is the cytoplasm. 3'-to-5' exoribonuclease specific for small oligoribonucleotides. The protein is Oligoribonuclease of Escherichia coli O157:H7.